The sequence spans 124 residues: MEDERWKLSSSKGRSKSGRSCSSSSNYYCHSSDFNSSNATTLSRSYSASVTASRHATTAWSAAGAGGGGASSSSSSQHQHQQQQQQSNNSQRLSKKCVEAVKEHRARFYIVRRCVSMLVCWRDY.

Positions 1–25 (MEDERWKLSSSKGRSKSGRSCSSSS) are disordered. N-linked (GlcNAc...) asparagine glycans are attached at residues Asn35 and Asn38. Residues 59 to 75 (AWSAAGAGGGGASSSSS) traverse the membrane as a helical segment. The segment at 60 to 95 (WSAAGAGGGGASSSSSSQHQHQQQQQQSNNSQRLSK) is disordered. Low complexity predominate over residues 71-91 (SSSSSSQHQHQQQQQQSNNSQ). The N-linked (GlcNAc...) asparagine glycan is linked to Asn88. The required for DVL/RTFL small polypeptide activity stretch occupies residues 92–124 (RLSKKCVEAVKEHRARFYIVRRCVSMLVCWRDY).

It belongs to the DVL/RTFL small polypeptides family.

It is found in the cell membrane. In terms of biological role, small polypeptide acting as a regulatory molecule which coordinates cellular responses required for differentiation, growth and development, probably by restricting polar cell proliferation in lateral organs (e.g. leaves and petioles). The polypeptide is Small polypeptide ROTUNDIFOLIA LIKE 3 (Oryza sativa subsp. indica (Rice)).